The primary structure comprises 314 residues: Lipoyl synthase (314 aa).

The segment at 1–24 (MMDTPIIRHPEKVRRPDNPSPRKP) is disordered. Residues Cys-53, Cys-58, Cys-64, Cys-79, Cys-83, Cys-86, and Ser-293 each coordinate [4Fe-4S] cluster. Residues 65–282 (WKRRHATFMI…ADIARGKGFL (218 aa)) form the Radical SAM core domain. Residues 294–308 (HHADRDFEDLRKARQ) show a composition bias toward basic and acidic residues. A disordered region spans residues 294–314 (HHADRDFEDLRKARQDAAATK).

Belongs to the radical SAM superfamily. Lipoyl synthase family. [4Fe-4S] cluster serves as cofactor.

It is found in the cytoplasm. The enzyme catalyses [[Fe-S] cluster scaffold protein carrying a second [4Fe-4S](2+) cluster] + N(6)-octanoyl-L-lysyl-[protein] + 2 oxidized [2Fe-2S]-[ferredoxin] + 2 S-adenosyl-L-methionine + 4 H(+) = [[Fe-S] cluster scaffold protein] + N(6)-[(R)-dihydrolipoyl]-L-lysyl-[protein] + 4 Fe(3+) + 2 hydrogen sulfide + 2 5'-deoxyadenosine + 2 L-methionine + 2 reduced [2Fe-2S]-[ferredoxin]. Its pathway is protein modification; protein lipoylation via endogenous pathway; protein N(6)-(lipoyl)lysine from octanoyl-[acyl-carrier-protein]: step 2/2. In terms of biological role, catalyzes the radical-mediated insertion of two sulfur atoms into the C-6 and C-8 positions of the octanoyl moiety bound to the lipoyl domains of lipoate-dependent enzymes, thereby converting the octanoylated domains into lipoylated derivatives. The protein is Lipoyl synthase of Rhodospirillum rubrum (strain ATCC 11170 / ATH 1.1.1 / DSM 467 / LMG 4362 / NCIMB 8255 / S1).